The sequence spans 483 residues: Aspartyl/glutamyl-tRNA(Asn/Gln) amidotransferase subunit B (483 aa).

It belongs to the GatB/GatE family. GatB subfamily. Heterotrimer of A, B and C subunits.

The catalysed reaction is L-glutamyl-tRNA(Gln) + L-glutamine + ATP + H2O = L-glutaminyl-tRNA(Gln) + L-glutamate + ADP + phosphate + H(+). The enzyme catalyses L-aspartyl-tRNA(Asn) + L-glutamine + ATP + H2O = L-asparaginyl-tRNA(Asn) + L-glutamate + ADP + phosphate + 2 H(+). In terms of biological role, allows the formation of correctly charged Asn-tRNA(Asn) or Gln-tRNA(Gln) through the transamidation of misacylated Asp-tRNA(Asn) or Glu-tRNA(Gln) in organisms which lack either or both of asparaginyl-tRNA or glutaminyl-tRNA synthetases. The reaction takes place in the presence of glutamine and ATP through an activated phospho-Asp-tRNA(Asn) or phospho-Glu-tRNA(Gln). This Rickettsia felis (strain ATCC VR-1525 / URRWXCal2) (Rickettsia azadi) protein is Aspartyl/glutamyl-tRNA(Asn/Gln) amidotransferase subunit B.